The primary structure comprises 461 residues: Probable ornithine decarboxylase (461 aa).

A disordered region spans residues 1 to 35; the sequence is MTGTKRNGEEVVNENNNNNVAEETNKKAKVDESST. Positions 13-22 are enriched in low complexity; it reads NENNNNNVAE. Positions 23-32 are enriched in basic and acidic residues; it reads ETNKKAKVDE. An N6-(pyridoxal phosphate)lysine modification is found at lysine 116. Residues serine 247, glycine 284, and 317-320 each bind pyridoxal 5'-phosphate; that span reads EPGR. 375–376 is a binding site for substrate; sequence FD. Cysteine 402 (proton donor; shared with dimeric partner) is an active-site residue. Aspartate 403 provides a ligand contact to substrate. Pyridoxal 5'-phosphate is bound at residue tyrosine 431.

The protein belongs to the Orn/Lys/Arg decarboxylase class-II family. As to quaternary structure, homodimer. Only the dimer is catalytically active, as the active sites are constructed of residues from both monomers. Requires pyridoxal 5'-phosphate as cofactor.

The enzyme catalyses L-ornithine + H(+) = putrescine + CO2. It participates in amine and polyamine biosynthesis; putrescine biosynthesis via L-ornithine pathway; putrescine from L-ornithine: step 1/1. Its activity is regulated as follows. Inhibited by antizyme (AZ) in response to polyamine levels. AZ inhibits the assembly of the functional homodimer by binding to ODC monomers and targeting them for ubiquitin-independent proteolytic destruction by the 26S proteasome. Its function is as follows. Catalyzes the first and rate-limiting step of polyamine biosynthesis that converts ornithine into putrescine, which is the precursor for the polyamines, spermidine and spermine. Polyamines are essential for cell proliferation and are implicated in cellular processes, ranging from DNA replication to apoptosis. In Dictyostelium discoideum (Social amoeba), this protein is Probable ornithine decarboxylase (odc).